A 150-amino-acid chain; its full sequence is Globin-1 (150 aa).

The Globin domain maps to 11-150 (ALTAAEKATI…MICILLRSSY (140 aa)). His-74 and His-106 together coordinate heme b.

It belongs to the globin family. Monomer.

This Petromyzon marinus (Sea lamprey) protein is Globin-1.